A 46-amino-acid chain; its full sequence is Defensin Tk-AMP-D6 (46 aa).

4 disulfides stabilise this stretch: cysteine 3–cysteine 46, cysteine 14–cysteine 34, cysteine 20–cysteine 40, and cysteine 24–cysteine 42.

In terms of biological role, plant defense peptide. This Triticum kiharae (Wheat) protein is Defensin Tk-AMP-D6.